The primary structure comprises 1462 residues: DNA polymerase III PolC-type (1462 aa).

The region spanning 424–580 is the Exonuclease domain; that stretch reads YVVFDVETTG…YDAEATGRLL (157 aa).

The protein belongs to the DNA polymerase type-C family. PolC subfamily.

The protein resides in the cytoplasm. It catalyses the reaction DNA(n) + a 2'-deoxyribonucleoside 5'-triphosphate = DNA(n+1) + diphosphate. In terms of biological role, required for replicative DNA synthesis. This DNA polymerase also exhibits 3' to 5' exonuclease activity. The chain is DNA polymerase III PolC-type from Streptococcus sanguinis (strain SK36).